The following is a 405-amino-acid chain: Diaminopimelate decarboxylase (405 aa).

Lys46 carries the post-translational modification N6-(pyridoxal phosphate)lysine. Residues Gly225 and 259-262 (EPGR) each bind pyridoxal 5'-phosphate. Positions 262, 298, and 302 each coordinate substrate. The Proton donor role is filled by Cys329. Substrate is bound by residues Glu330 and Tyr358. Tyr358 is a binding site for pyridoxal 5'-phosphate.

It belongs to the Orn/Lys/Arg decarboxylase class-II family. LysA subfamily. Homodimer. It depends on pyridoxal 5'-phosphate as a cofactor.

The enzyme catalyses meso-2,6-diaminopimelate + H(+) = L-lysine + CO2. It functions in the pathway amino-acid biosynthesis; L-lysine biosynthesis via DAP pathway; L-lysine from DL-2,6-diaminopimelate: step 1/1. Its function is as follows. Specifically catalyzes the decarboxylation of meso-diaminopimelate (meso-DAP) to L-lysine. This is Diaminopimelate decarboxylase from Helicobacter pylori (strain ATCC 700392 / 26695) (Campylobacter pylori).